We begin with the raw amino-acid sequence, 208 residues long: Na(+)-translocating NADH-quinone reductase subunit D (208 aa).

The next 5 helical transmembrane spans lie at 42 to 62, 72 to 92, 103 to 123, 131 to 151, and 178 to 198; these read IVMG…ISLV, IIVQ…LLQA, VFVG…AFAM, LIDG…VATV, and NGLF…IWGL.

This sequence belongs to the NqrDE/RnfAE family. As to quaternary structure, composed of six subunits; NqrA, NqrB, NqrC, NqrD, NqrE and NqrF.

It localises to the cell inner membrane. It carries out the reaction a ubiquinone + n Na(+)(in) + NADH + H(+) = a ubiquinol + n Na(+)(out) + NAD(+). NQR complex catalyzes the reduction of ubiquinone-1 to ubiquinol by two successive reactions, coupled with the transport of Na(+) ions from the cytoplasm to the periplasm. NqrA to NqrE are probably involved in the second step, the conversion of ubisemiquinone to ubiquinol. In Neisseria gonorrhoeae (strain ATCC 700825 / FA 1090), this protein is Na(+)-translocating NADH-quinone reductase subunit D.